A 209-amino-acid polypeptide reads, in one-letter code: Probable nicotinate-nucleotide adenylyltransferase (209 aa).

Belongs to the NadD family.

The enzyme catalyses nicotinate beta-D-ribonucleotide + ATP + H(+) = deamido-NAD(+) + diphosphate. It functions in the pathway cofactor biosynthesis; NAD(+) biosynthesis; deamido-NAD(+) from nicotinate D-ribonucleotide: step 1/1. Functionally, catalyzes the reversible adenylation of nicotinate mononucleotide (NaMN) to nicotinic acid adenine dinucleotide (NaAD). The sequence is that of Probable nicotinate-nucleotide adenylyltransferase from Idiomarina loihiensis (strain ATCC BAA-735 / DSM 15497 / L2-TR).